A 146-amino-acid chain; its full sequence is Ferredoxin-thioredoxin reductase catalytic chain, chloroplastic (146 aa).

The transit peptide at 1–26 (MMSMASTTASPFCPSPMPRGRKCTVR) directs the protein to the chloroplast. Cys85 provides a ligand contact to [4Fe-4S] cluster. The active-site Nucleophile is the Cys87. Cys87 and Cys117 are disulfide-bonded. [4Fe-4S] cluster is bound by residues Cys104, Cys106, and Cys115.

This sequence belongs to the ferredoxin thioredoxin reductase beta subunit family. As to quaternary structure, heterodimer of subunit A (variable subunit) and subunit B (catalytic subunit). Heterodimeric FTR forms a complex with ferredoxin and thioredoxin. [4Fe-4S] cluster serves as cofactor.

Its subcellular location is the plastid. The protein localises to the chloroplast. It catalyses the reaction [thioredoxin]-disulfide + 2 reduced [2Fe-2S]-[ferredoxin] + 2 H(+) = [thioredoxin]-dithiol + 2 oxidized [2Fe-2S]-[ferredoxin]. Its function is as follows. Catalytic subunit of the ferredoxin-thioredoxin reductase (FTR), which catalyzes the two-electron reduction of thioredoxins by the electrons provided by reduced ferredoxin. This chain is Ferredoxin-thioredoxin reductase catalytic chain, chloroplastic, found in Oryza sativa subsp. japonica (Rice).